We begin with the raw amino-acid sequence, 400 residues long: Large envelope protein (400 aa).

Methionine 1 is modified (N-acetylmethionine). Glycine 2 carries the N-myristoyl glycine; by host lipid modification. Positions 2–119 (GAPLSTARRG…PPLRDTHPQA (118 aa)) are pre-S1. The pre-S stretch occupies residues 2–174 (GAPLSTARRG…FSKTGDPAMN (173 aa)). Over 2 to 181 (GAPLSTARRG…AMNMENITSG (180 aa)) the chain is Virion surface; in external conformation. The Intravirion; in internal conformation segment spans residues 2 to 253 (GAPLSTARRG…PGYRWMCLRR (252 aa)). Proline 4 carries N-linked (GlcNAc...) asparagine glycosylation. The interval 70 to 115 (PHGGLLGWSPQAQGILTTSPPDPPPASTNRRSGRKPTPVSPPLRDT) is disordered. Residues 79–88 (PQAQGILTTS) show a composition bias toward polar residues. The interval 120–174 (MQWNSTQFHQALLDPRVRGLYFPAGGSSSETQNPVPTIASLTSSIFSKTGDPAMN) is pre-S2. The helical transmembrane segment at 182 to 202 (LLGPLLVLQAVCFLLTKILTI) threads the bilayer. Residues 203–253 (PQSLDSWWTSLNFLGVPPGCPGQNSQSPISNHLPTSCPPTCPGYRWMCLRR) are Intravirion; in external conformation-facing. The helical transmembrane segment at 254 to 274 (FIIFLFILLLCLIFLLVLLDY) threads the bilayer. Residues 275-348 (QGMLPVCPLL…WASARFSWLS (74 aa)) are Virion surface-facing. Asparagine 320 carries an N-linked (GlcNAc...) asparagine; by host glycan. The chain crosses the membrane as a helical span at residues 349–369 (LLVQFVQWCVGLSPTVWLLVI). Topologically, residues 370–375 (WMIWYW) are intravirion. A helical transmembrane segment spans residues 376–398 (GPNLCSILSPFIPLLPIFCYLWA). Residues 399-400 (SI) lie on the Virion surface side of the membrane.

It belongs to the orthohepadnavirus major surface antigen family. In its internal form (Li-HBsAg), interacts with the capsid protein and with the isoform S. Interacts with host chaperone CANX. In terms of assembly, associates with host chaperone CANX through its pre-S2 N glycan; this association may be essential for isoform M proper secretion. As to quaternary structure, interacts with isoform L. Interacts with the antigens of satellite virus HDV (HDVAgs); this interaction is required for encapsidation of HDV genomic RNA. Post-translationally, isoform M is N-terminally acetylated by host at a ratio of 90%, and N-glycosylated by host at the pre-S2 region. In terms of processing, myristoylated.

Its subcellular location is the virion membrane. In terms of biological role, the large envelope protein exists in two topological conformations, one which is termed 'external' or Le-HBsAg and the other 'internal' or Li-HBsAg. In its external conformation the protein attaches the virus to cell receptors and thereby initiating infection. This interaction determines the species specificity and liver tropism. This attachment induces virion internalization predominantly through caveolin-mediated endocytosis. The large envelope protein also assures fusion between virion membrane and endosomal membrane. In its internal conformation the protein plays a role in virion morphogenesis and mediates the contact with the nucleocapsid like a matrix protein. The middle envelope protein plays an important role in the budding of the virion. It is involved in the induction of budding in a nucleocapsid independent way. In this process the majority of envelope proteins bud to form subviral lipoprotein particles of 22 nm of diameter that do not contain a nucleocapsid. This Homo sapiens (Human) protein is Large envelope protein.